The following is a 311-amino-acid chain: Tryptophan 2,3-dioxygenase (311 aa).

Residues 1 to 37 (MQPPGGDAPAGCPFSGARAAQPAQAAHEAPHVPGEAD) are disordered. The span at 17–27 (ARAAQPAQAAH) shows a compositional bias: low complexity. Residues 80 to 84 (FIIQH), Tyr-142, and Arg-146 contribute to the substrate site. His-269 provides a ligand contact to heme. Thr-283 lines the substrate pocket.

This sequence belongs to the tryptophan 2,3-dioxygenase family. Homotetramer. It depends on heme as a cofactor.

The catalysed reaction is L-tryptophan + O2 = N-formyl-L-kynurenine. It participates in amino-acid degradation; L-tryptophan degradation via kynurenine pathway; L-kynurenine from L-tryptophan: step 1/2. Its function is as follows. Heme-dependent dioxygenase that catalyzes the oxidative cleavage of the L-tryptophan (L-Trp) pyrrole ring and converts L-tryptophan to N-formyl-L-kynurenine. Catalyzes the oxidative cleavage of the indole moiety. This chain is Tryptophan 2,3-dioxygenase, found in Burkholderia cenocepacia (strain ATCC BAA-245 / DSM 16553 / LMG 16656 / NCTC 13227 / J2315 / CF5610) (Burkholderia cepacia (strain J2315)).